Reading from the N-terminus, the 164-residue chain is Galectin-3 (164 aa).

Residues 9–154 form the Galectin domain; the sequence is STVDLSEPLK…FSDVLGVTVL (146 aa). Residues H60, R64, N73, and E84 each coordinate a carbohydrate.

As to quaternary structure, homotetramer. Oligomerization is required for carbohydrate binding.

It is found in the secreted. Its subcellular location is the extracellular space. It localises to the extracellular matrix. The protein localises to the cell wall. Binds lactose. May play a role in fruiting body formation. The chain is Galectin-3 (Cgl3) from Coprinopsis cinerea (strain Okayama-7 / 130 / ATCC MYA-4618 / FGSC 9003) (Inky cap fungus).